A 153-amino-acid polypeptide reads, in one-letter code: Large ribosomal subunit protein uL15 (153 aa).

Residues 21 to 41 (RGIGSGKGKTGGRGIKGQKSR) form a disordered region. Over residues 23 to 35 (IGSGKGKTGGRGI) the composition is skewed to gly residues.

It belongs to the universal ribosomal protein uL15 family. Part of the 50S ribosomal subunit.

Functionally, binds to the 23S rRNA. The protein is Large ribosomal subunit protein uL15 of Rickettsia felis (strain ATCC VR-1525 / URRWXCal2) (Rickettsia azadi).